A 794-amino-acid polypeptide reads, in one-letter code: uncharacterized protein (794 aa).

Positions 1 to 22 are cleaved as a signal peptide; that stretch reads MKFKYGAIVFSGLLGVSAILAA. Cysteine 23 is lipidated: N-palmitoyl cysteine. Cysteine 23 carries the S-diacylglycerol cysteine lipid modification. 2 stretches are compositionally biased toward polar residues: residues 182 to 200 and 245 to 261; these read TSVQ…NNGV and QMST…DANQ. Disordered stretches follow at residues 182–208, 222–261, 474–529, 566–594, and 737–757; these read TSVQ…KIDK, NKAK…DANQ, FKIK…GKNG, SAAK…TEQK, and KNEK…RGKQ. The segment covering 475-501 has biased composition (low complexity); it reads KIKSSNKSKSSSSKSSTKAETGKTSGG. Over residues 511-526 the composition is skewed to polar residues; it reads GAQNQGKKGEGAQNQG. Residues 567 to 576 show a composition bias toward basic and acidic residues; it reads AAKKEDKKSG. Polar residues predominate over residues 577–593; the sequence is ESTTEQTQIQSKSVTEQ. Residues 737 to 751 show a composition bias toward basic and acidic residues; it reads KNEKKEGSDQKDSKS.

The protein belongs to the MG185/MG260 family.

Its subcellular location is the cell membrane. This is an uncharacterized protein from Mycoplasma pneumoniae (strain ATCC 29342 / M129 / Subtype 1) (Mycoplasmoides pneumoniae).